The following is a 27-amino-acid chain: Equinin A (27 aa).

Residues 1–13 (AVDKGGGKAEKKD) are compositionally biased toward basic and acidic residues. Residues 1–27 (AVDKGGGKAEKKDGNRKKKLAGGEGGG) are disordered.

It localises to the secreted. Peptide with unknown function. Does not show antimicrobial and hemolytic activities. The chain is Equinin A from Actinia equina (Beadlet anemone).